A 325-amino-acid polypeptide reads, in one-letter code: Tetraacyldisaccharide 4'-kinase (325 aa).

53-60 (SVGGNGKT) is a binding site for ATP.

This sequence belongs to the LpxK family.

It carries out the reaction a lipid A disaccharide + ATP = a lipid IVA + ADP + H(+). It functions in the pathway glycolipid biosynthesis; lipid IV(A) biosynthesis; lipid IV(A) from (3R)-3-hydroxytetradecanoyl-[acyl-carrier-protein] and UDP-N-acetyl-alpha-D-glucosamine: step 6/6. Its function is as follows. Transfers the gamma-phosphate of ATP to the 4'-position of a tetraacyldisaccharide 1-phosphate intermediate (termed DS-1-P) to form tetraacyldisaccharide 1,4'-bis-phosphate (lipid IVA). This Actinobacillus succinogenes (strain ATCC 55618 / DSM 22257 / CCUG 43843 / 130Z) protein is Tetraacyldisaccharide 4'-kinase.